The chain runs to 246 residues: Octanoyltransferase (246 aa).

Residues 50–231 form the BPL/LPL catalytic domain; sequence PDTDDEIWVV…RLIAHLDGAT (182 aa). Residues 90-97, 162-164, and 175-177 contribute to the substrate site; these read RGGQITYH, ALG, and GLS. The active-site Acyl-thioester intermediate is the C193.

It belongs to the LipB family.

The protein localises to the cytoplasm. The catalysed reaction is octanoyl-[ACP] + L-lysyl-[protein] = N(6)-octanoyl-L-lysyl-[protein] + holo-[ACP] + H(+). It participates in protein modification; protein lipoylation via endogenous pathway; protein N(6)-(lipoyl)lysine from octanoyl-[acyl-carrier-protein]: step 1/2. In terms of biological role, catalyzes the transfer of endogenously produced octanoic acid from octanoyl-acyl-carrier-protein onto the lipoyl domains of lipoate-dependent enzymes. Lipoyl-ACP can also act as a substrate although octanoyl-ACP is likely to be the physiological substrate. The protein is Octanoyltransferase of Burkholderia pseudomallei (strain 1106a).